The sequence spans 702 residues: Cytolytic toxin-alpha (702 aa).

The interval S2–S265 is structural MACPF/CDC pore-forming domain. N93, N100, N201, N287, and N311 each carry an N-linked (GlcNAc...) asparagine glycan. Positions Q266–A385 are structural FAT domain. The tract at residues V386 to V513 is thioredoxin (THX) domain. One can recognise a B30.2/SPRY domain in the interval I505–L702. N-linked (GlcNAc...) asparagine glycosylation is present at N530.

The protein belongs to the SNTX/VTX toxin family. In terms of assembly, heterodimer of alpha and beta subunits; non-covalently linked. Also associates into tetramers or even higher aggregates. Intrachain disulfide bonds may be present in the heterodimer. Expressed by the venom gland.

The protein resides in the secreted. Functionally, this heterodimer induces potent hemolytic activities (when tested on rabbit erythrocytes, EC(50)=25-56 ng/mL) due to its ability to form pores in the cell membrane. The pore may be composed of 10 alpha/beta heterodimers. The toxin shows cardiovascular effects that include a vasorelaxant action that may involve the L-arginine-nitric oxid synthase pathway. In addition, it displays edema-inducing activities, increases vascular permeability. It also shows myotoxic activities and interferes irreversibly with neuromuscular function. It also induces irreversible platelet aggregation in rabbit or rat (but not in human or mouse) whole blood. In addition, it has been observed to increase spontaneous quantal acetylcholine release from isolated frog cutaneous pectoris motor endings. This Scorpaena plumieri (Spotted scorpionfish) protein is Cytolytic toxin-alpha.